Here is a 104-residue protein sequence, read N- to C-terminus: ATP-dependent Clp protease adapter protein ClpS (104 aa).

The segment at M1–T20 is disordered.

It belongs to the ClpS family. Binds to the N-terminal domain of the chaperone ClpA.

Involved in the modulation of the specificity of the ClpAP-mediated ATP-dependent protein degradation. The sequence is that of ATP-dependent Clp protease adapter protein ClpS from Desulfatibacillum aliphaticivorans.